Reading from the N-terminus, the 50-residue chain is Putative protein HokG (50 aa).

The chain crosses the membrane as a helical span at residues Tyr5 to Gly25.

This sequence belongs to the Hok/Gef family.

The protein resides in the cell inner membrane. In terms of biological role, toxic component of a type I toxin-antitoxin (TA) system. When overexpressed kills cells within minutes; causes collapse of the transmembrane potential and arrest of respiration. Its toxic effect is probably neutralized by an antisense antitoxin Sok RNA. This Escherichia coli O157:H7 protein is Putative protein HokG (hokG).